A 287-amino-acid polypeptide reads, in one-letter code: 4-hydroxybenzoate octaprenyltransferase (287 aa).

6 helical membrane-spanning segments follow: residues 41-61, 89-109, 133-153, 158-178, 218-238, and 267-287; these read WPLIVIFALGTLLMRSAGCAM, WEAVAIAVGLSFVAFLLILPL, FFAIPQAYLGIAFGFGIPMAF, NTVPPLAWVMLIANVFWSIAY, LGIYVWIGIALGFGAAYWVGW, and NNWLGGVLFAGIAAHYLMAGS.

It belongs to the UbiA prenyltransferase family. The cofactor is Mg(2+).

It is found in the cell inner membrane. The enzyme catalyses all-trans-octaprenyl diphosphate + 4-hydroxybenzoate = 4-hydroxy-3-(all-trans-octaprenyl)benzoate + diphosphate. The protein operates within cofactor biosynthesis; ubiquinone biosynthesis. Its function is as follows. Catalyzes the prenylation of para-hydroxybenzoate (PHB) with an all-trans polyprenyl group. Mediates the second step in the final reaction sequence of ubiquinone-8 (UQ-8) biosynthesis, which is the condensation of the polyisoprenoid side chain with PHB, generating the first membrane-bound Q intermediate 3-octaprenyl-4-hydroxybenzoate. This chain is 4-hydroxybenzoate octaprenyltransferase, found in Burkholderia multivorans (strain ATCC 17616 / 249).